The primary structure comprises 149 residues: Nucleoside diphosphate kinase (149 aa).

ATP contacts are provided by K9, F57, R85, T91, R102, and N112. H115 serves as the catalytic Pros-phosphohistidine intermediate.

It belongs to the NDK family. In terms of assembly, homotetramer. The cofactor is Mg(2+).

Its subcellular location is the cytoplasm. It carries out the reaction a 2'-deoxyribonucleoside 5'-diphosphate + ATP = a 2'-deoxyribonucleoside 5'-triphosphate + ADP. It catalyses the reaction a ribonucleoside 5'-diphosphate + ATP = a ribonucleoside 5'-triphosphate + ADP. Functionally, major role in the synthesis of nucleoside triphosphates other than ATP. The ATP gamma phosphate is transferred to the NDP beta phosphate via a ping-pong mechanism, using a phosphorylated active-site intermediate. This Microcystis aeruginosa (strain NIES-843 / IAM M-2473) protein is Nucleoside diphosphate kinase.